The sequence spans 373 residues: MATAGKVIKCKAAVAWEAGKPLSMEEVEDAPPQAMEVRDKILYTALCHTDVYFWEANGQTPVFPRILGHEAGGIVESVGEGVTELVPGDHVLPVFTGECKECAHCMSEESNLCDLLRINVDRGVMIDDGQSRFTIDGKPIFHFLGTSTFSEYTVIHVGCVAKIDPEAPLDKVCLLSCGISTGLGATLNVTKPKKGMTVAIFGLGAVGLAAMEGARMSGASRIIGVDLNPAKHEQAKKFGCTDFVNPKDHTKPVQEVIVEMTDGGVNRAVECTGNADAMISAFECVHDGWGVAHKEAVFKTHPMNFLNERTLRGTFFGNYKPRTGLPGVVDMYMRKELELDKFITHSLPFSQINTAFDLMLRGEGLRCVIRSEE.

Cys-47, Thr-49, His-69, Cys-99, Cys-102, Cys-105, Cys-113, and Cys-177 together coordinate Zn(2+). Thr-49 and His-69 together coordinate an alcohol. Position 49 (Thr-49) interacts with NAD(+). Residues 202-207, Asp-226, Lys-231, Thr-272, Phe-316, and Arg-366 contribute to the NAD(+) site; that span reads GLGAVG.

Belongs to the zinc-containing alcohol dehydrogenase family. In terms of assembly, homodimer. The cofactor is Zn(2+).

It is found in the cytoplasm. The catalysed reaction is a primary alcohol + NAD(+) = an aldehyde + NADH + H(+). The enzyme catalyses a secondary alcohol + NAD(+) = a ketone + NADH + H(+). The polypeptide is Alcohol dehydrogenase 2 (ADH2) (Hordeum vulgare (Barley)).